A 246-amino-acid polypeptide reads, in one-letter code: Probable transcriptional regulatory protein HS_0508 (246 aa).

Belongs to the TACO1 family.

The protein resides in the cytoplasm. The protein is Probable transcriptional regulatory protein HS_0508 of Histophilus somni (strain 129Pt) (Haemophilus somnus).